The following is a 92-amino-acid chain: Small ribosomal subunit protein uS19c (92 aa).

This sequence belongs to the universal ribosomal protein uS19 family.

Its subcellular location is the plastid. The protein resides in the chloroplast. Protein S19 forms a complex with S13 that binds strongly to the 16S ribosomal RNA. In Chara vulgaris (Common stonewort), this protein is Small ribosomal subunit protein uS19c.